A 385-amino-acid polypeptide reads, in one-letter code: Probable thioesterase PNKD (385 aa).

The disordered stretch occupies residues 32–58 (KASHNRTRALQSHSSPEGKEEPEPLSP). Zn(2+)-binding residues include His-172, His-174, Asp-176, His-177, His-229, Asp-253, and His-291.

The protein belongs to the metallo-beta-lactamase superfamily. Glyoxalase II family. As to quaternary structure, isoform 2 interacts with the sarcomeric proteins, MRLC2, MYOM1 and ENO3. Requires Zn(2+) as cofactor. In terms of processing, undergoes cleavage at the N-terminus. As to expression, isoform 1 is only expressed in the brain. Isoform 2 is ubiquitously detected with highest expression in skeletal muscle and detected in myocardial myofibrils.

The protein resides in the cell membrane. Its subcellular location is the mitochondrion. It is found in the cytoplasm. The protein localises to the golgi apparatus. It localises to the endoplasmic reticulum. The enzyme catalyses a thioester + H2O = a thiol + a carboxylate + H(+). Its function is as follows. Probable thioesterase that may play a role in cellular detoxification processes; it likely acts on a yet-unknown alpha-hydroxythioester substrate. In vitro, it is able to catalyze the hydrolysis of S-D-lactoyl-glutathione to form glutathione and D-lactic acid at very low rate, though this reaction is not physiologically relevant in vivo. This is Probable thioesterase PNKD (PNKD) from Homo sapiens (Human).